Here is a 349-residue protein sequence, read N- to C-terminus: GDP-mannose:glycolipid 4-beta-D-mannosyltransferase (349 aa).

The signal sequence occupies residues 1-14 (MSASASLPVTRAAA).

Belongs to the glycosyltransferase 94 family.

The protein localises to the cell inner membrane. It carries out the reaction beta-D-GlcA-(1-&gt;2)-alpha-D-Man-(1-&gt;3)-beta-D-Glc-(1-&gt;4)-alpha-D-Glc-di-trans,octa-cis-undecaprenyl diphosphate + GDP-alpha-D-mannose = beta-D-Man-(1-&gt;4)-beta-D-GlcA-(1-&gt;2)-alpha-D-Man-(1-&gt;3)-beta-D-Glc-(1-&gt;4)-alpha-D-Glc-di-trans,octa-cis-undecaprenyl diphosphate + GDP + H(+). It functions in the pathway glycan biosynthesis; xanthan biosynthesis. Functionally, nonprocessive beta-mannosyltransferase that catalyzes the transfer of a mannose residue from GDP-mannose to glucuronic acid-beta-1,2-mannose-alpha-1,3-glucose-beta-1,4-glucose-PP-polyisoprenyl to form the lipid-linked pentasaccharide repeating unit of xanthan, Man-GlcA-Man-Glc(2)-PP-Pol. Is involved in the biosynthesis of the exopolysaccharide xanthan. This is GDP-mannose:glycolipid 4-beta-D-mannosyltransferase (gumI) from Xanthomonas campestris pv. campestris (strain ATCC 33913 / DSM 3586 / NCPPB 528 / LMG 568 / P 25).